The primary structure comprises 334 residues: tRNA N6-adenosine threonylcarbamoyltransferase (334 aa).

Fe cation-binding residues include histidine 107 and histidine 111. Substrate is bound by residues 129 to 133 (LVSGG), aspartate 162, glycine 175, and asparagine 269. Position 297 (aspartate 297) interacts with Fe cation.

The protein belongs to the KAE1 / TsaD family. Fe(2+) serves as cofactor.

It localises to the cytoplasm. It catalyses the reaction L-threonylcarbamoyladenylate + adenosine(37) in tRNA = N(6)-L-threonylcarbamoyladenosine(37) in tRNA + AMP + H(+). Its function is as follows. Required for the formation of a threonylcarbamoyl group on adenosine at position 37 (t(6)A37) in tRNAs that read codons beginning with adenine. Is involved in the transfer of the threonylcarbamoyl moiety of threonylcarbamoyl-AMP (TC-AMP) to the N6 group of A37, together with TsaE and TsaB. TsaD likely plays a direct catalytic role in this reaction. The protein is tRNA N6-adenosine threonylcarbamoyltransferase of Campylobacter concisus (strain 13826).